We begin with the raw amino-acid sequence, 424 residues long: Glutamate-1-semialdehyde 2,1-aminomutase (424 aa).

At K263 the chain carries N6-(pyridoxal phosphate)lysine.

This sequence belongs to the class-III pyridoxal-phosphate-dependent aminotransferase family. HemL subfamily. In terms of assembly, homodimer. Requires pyridoxal 5'-phosphate as cofactor.

It localises to the cytoplasm. It catalyses the reaction (S)-4-amino-5-oxopentanoate = 5-aminolevulinate. It participates in porphyrin-containing compound metabolism; protoporphyrin-IX biosynthesis; 5-aminolevulinate from L-glutamyl-tRNA(Glu): step 2/2. In Campylobacter jejuni subsp. jejuni serotype O:23/36 (strain 81-176), this protein is Glutamate-1-semialdehyde 2,1-aminomutase.